We begin with the raw amino-acid sequence, 283 residues long: Diaminopimelate epimerase (283 aa).

Residues Asn-13, Gln-45, and Asn-65 each coordinate substrate. Cys-74 acts as the Proton donor in catalysis. Substrate contacts are provided by residues 75–76 (GN), Asn-156, Asn-190, and 208–209 (ER). Residue Cys-217 is the Proton acceptor of the active site. Residue 218 to 219 (GS) coordinates substrate.

It belongs to the diaminopimelate epimerase family. Homodimer.

It is found in the cytoplasm. The enzyme catalyses (2S,6S)-2,6-diaminopimelate = meso-2,6-diaminopimelate. It functions in the pathway amino-acid biosynthesis; L-lysine biosynthesis via DAP pathway; DL-2,6-diaminopimelate from LL-2,6-diaminopimelate: step 1/1. Its function is as follows. Catalyzes the stereoinversion of LL-2,6-diaminopimelate (L,L-DAP) to meso-diaminopimelate (meso-DAP), a precursor of L-lysine and an essential component of the bacterial peptidoglycan. This Bartonella henselae (strain ATCC 49882 / DSM 28221 / CCUG 30454 / Houston 1) (Rochalimaea henselae) protein is Diaminopimelate epimerase.